The sequence spans 404 residues: 6-deoxyerythronolide B hydroxylase (404 aa).

Cys-351 is a heme binding site.

It belongs to the cytochrome P450 family. Heme serves as cofactor.

The protein resides in the cytoplasm. The catalysed reaction is 6-deoxyerythronolide B + 2 reduced [2Fe-2S]-[ferredoxin] + O2 + 2 H(+) = erythronolide B + 2 oxidized [2Fe-2S]-[ferredoxin] + H2O. It functions in the pathway antibiotic biosynthesis; erythromycin biosynthesis. Functionally, catalyzes the conversion of 6-deoxyerythronolide B (6-DEB) to erythronolide B (EB) by the insertion of an oxygen at the 6S position of 6-DEB. Requires the participation of a ferredoxin and a ferredoxin reductase for the transfer of electrons from NADPH to the monooxygenase. The chain is 6-deoxyerythronolide B hydroxylase from Saccharopolyspora erythraea (strain ATCC 11635 / DSM 40517 / JCM 4748 / NBRC 13426 / NCIMB 8594 / NRRL 2338).